A 206-amino-acid chain; its full sequence is MELNVKTLEGKDAGKVSLSDEIFGLDPRQDILARMVRWQLAKKQQGTHKTKNRSEVSRTGAKMYKQKGTGRARHHSARAPQFRGGGKAHGPVVRSHAHDLPKKVRALALRHALSAKLKAEELIIVDQLVASEAKTKALLGSFASLGLTNALVIGGAELDGNFKLAAQNIPNVDVLPVQGINVYDILRRGKLVLSKAAVEALEERFK.

A disordered region spans residues 42–93 (KKQQGTHKTKNRSEVSRTGAKMYKQKGTGRARHHSARAPQFRGGGKAHGPVV). The segment covering 64–77 (YKQKGTGRARHHSA) has biased composition (basic residues).

This sequence belongs to the universal ribosomal protein uL4 family. Part of the 50S ribosomal subunit.

One of the primary rRNA binding proteins, this protein initially binds near the 5'-end of the 23S rRNA. It is important during the early stages of 50S assembly. It makes multiple contacts with different domains of the 23S rRNA in the assembled 50S subunit and ribosome. Functionally, forms part of the polypeptide exit tunnel. The chain is Large ribosomal subunit protein uL4 from Agrobacterium fabrum (strain C58 / ATCC 33970) (Agrobacterium tumefaciens (strain C58)).